The primary structure comprises 589 residues: Actin-histidine N-methyltransferase (589 aa).

The tract at residues 1–22 (MGKKSRVKTQKSGTGATATVSP) is disordered. Positions 10–20 (QKSGTGATATV) are enriched in polar residues. Residues arginine 75, 104–106 (EGF), arginine 254, 275–279 (DMCNH), and 325–327 (SGF) contribute to the S-adenosyl-L-methionine site. Residues 94–314 (EGFEMVNFKE…AGEQIYIFYG (221 aa)) enclose the SET domain. A Phosphoserine modification is found at serine 513. Residues 547-589 (LVNGERSFPNGTRSEEDLKQEERKRAKGDAKESSSDSTDAVKE) are disordered. The span at 559-589 (RSEEDLKQEERKRAKGDAKESSSDSTDAVKE) shows a compositional bias: basic and acidic residues.

Belongs to the class V-like SAM-binding methyltransferase superfamily. SETD3 actin-histidine methyltransferase family. In terms of assembly, interacts with MYOD1. In terms of processing, phosphorylated by GSK3B, which is required for recognition by the SCF(FBXW7) complex and subsequent degradation. Post-translationally, ubiquitinated by the SCF(FBXW7) complex following phosphorylation by GSK3B, leading to its degradation by the proteasome.

The protein localises to the cytoplasm. The protein resides in the nucleus. It carries out the reaction L-histidyl-[protein] + S-adenosyl-L-methionine = N(tele)-methyl-L-histidyl-[protein] + S-adenosyl-L-homocysteine + H(+). In terms of biological role, protein-histidine N-methyltransferase that specifically mediates 3-methylhistidine (tele-methylhistidine) methylation of actin at 'His-73'. Histidine methylation of actin is required for smooth muscle contraction of the laboring uterus during delivery. Does not have protein-lysine N-methyltransferase activity and probably only catalyzes histidine methylation of actin. The sequence is that of Actin-histidine N-methyltransferase from Dasypus novemcinctus (Nine-banded armadillo).